A 359-amino-acid polypeptide reads, in one-letter code: DNA polymerase IV (359 aa).

The UmuC domain maps to 4–185; it reads IIHIDMDCYF…LSLRKIPGVG (182 aa). Asp-8 and Asp-103 together coordinate Mg(2+). The active site involves Glu-104.

The protein belongs to the DNA polymerase type-Y family. In terms of assembly, monomer. The cofactor is Mg(2+).

It localises to the cytoplasm. It catalyses the reaction DNA(n) + a 2'-deoxyribonucleoside 5'-triphosphate = DNA(n+1) + diphosphate. Its function is as follows. Poorly processive, error-prone DNA polymerase involved in untargeted mutagenesis. Copies undamaged DNA at stalled replication forks, which arise in vivo from mismatched or misaligned primer ends. These misaligned primers can be extended by PolIV. Exhibits no 3'-5' exonuclease (proofreading) activity. May be involved in translesional synthesis, in conjunction with the beta clamp from PolIII. The chain is DNA polymerase IV from Shewanella sp. (strain ANA-3).